Reading from the N-terminus, the 407-residue chain is L-cysteine:1D-myo-inositol 2-amino-2-deoxy-alpha-D-glucopyranoside ligase (407 aa).

Position 43 (cysteine 43) interacts with Zn(2+). L-cysteinyl-5'-AMP-binding positions include 43–46 (CGIT), threonine 58, and 81–83 (NAT). Residues 45–55 (ITPYDATHLGH) carry the 'HIGH' region motif. The short motif at 183–188 (QRGGDP) is the 'ERGGDP' region element. Tryptophan 223 contributes to the L-cysteinyl-5'-AMP binding site. Cysteine 227 lines the Zn(2+) pocket. 245-247 (GSD) is an L-cysteinyl-5'-AMP binding site. Histidine 252 contributes to the Zn(2+) binding site. Residue valine 279 participates in L-cysteinyl-5'-AMP binding. Positions 285–289 (KMSKS) match the 'KMSKS' region motif.

It belongs to the class-I aminoacyl-tRNA synthetase family. MshC subfamily. As to quaternary structure, monomer. Zn(2+) is required as a cofactor.

It catalyses the reaction 1D-myo-inositol 2-amino-2-deoxy-alpha-D-glucopyranoside + L-cysteine + ATP = 1D-myo-inositol 2-(L-cysteinylamino)-2-deoxy-alpha-D-glucopyranoside + AMP + diphosphate + H(+). In terms of biological role, catalyzes the ATP-dependent condensation of GlcN-Ins and L-cysteine to form L-Cys-GlcN-Ins. In Streptosporangium roseum (strain ATCC 12428 / DSM 43021 / JCM 3005 / KCTC 9067 / NCIMB 10171 / NRRL 2505 / NI 9100), this protein is L-cysteine:1D-myo-inositol 2-amino-2-deoxy-alpha-D-glucopyranoside ligase.